A 496-amino-acid polypeptide reads, in one-letter code: Glutamyl-tRNA(Gln) amidotransferase subunit A (496 aa).

Residues Lys-75 and Ser-150 each act as charge relay system in the active site. Ser-174 functions as the Acyl-ester intermediate in the catalytic mechanism.

Belongs to the amidase family. GatA subfamily. As to quaternary structure, heterotrimer of A, B and C subunits.

It catalyses the reaction L-glutamyl-tRNA(Gln) + L-glutamine + ATP + H2O = L-glutaminyl-tRNA(Gln) + L-glutamate + ADP + phosphate + H(+). In terms of biological role, allows the formation of correctly charged Gln-tRNA(Gln) through the transamidation of misacylated Glu-tRNA(Gln) in organisms which lack glutaminyl-tRNA synthetase. The reaction takes place in the presence of glutamine and ATP through an activated gamma-phospho-Glu-tRNA(Gln). The polypeptide is Glutamyl-tRNA(Gln) amidotransferase subunit A (Burkholderia thailandensis (strain ATCC 700388 / DSM 13276 / CCUG 48851 / CIP 106301 / E264)).